Consider the following 602-residue polypeptide: Type II restriction enzyme StsI (602 aa).

The enzyme catalyses Endonucleolytic cleavage of DNA to give specific double-stranded fragments with terminal 5'-phosphates.. Its function is as follows. An S subtype restriction enzyme that recognizes the double-stranded sequences 5'-GGATG-3' and 3'-CATCC-5' and cleaves respectively 15 bases after G-1 and 14 bases before C-1. This chain is Type II restriction enzyme StsI (stsIR), found in Streptococcus sanguinis.